The primary structure comprises 408 residues: Zinc-regulated transporter 1 (408 aa).

The next 3 helical transmembrane spans lie at 64–84, 101–121, and 141–161; these read IGAI…PLVL, LFAR…HLLA, and WAPG…VLLN. Thr-234 and Thr-237 each carry phosphothreonine. 5 consecutive transmembrane segments (helical) span residues 254-274, 279-299, 315-335, 351-371, and 387-407; these read FIIL…TTAV, FKTL…GLGS, WVLG…GLGV, GVLD…ELLA, and LIYL…LGKW.

This sequence belongs to the ZIP transporter (TC 2.A.5) family.

The protein resides in the endoplasmic reticulum membrane. In terms of biological role, high-affinity zinc transport protein. Regulates intracellular zinc levels. The polypeptide is Zinc-regulated transporter 1 (zrt1) (Schizosaccharomyces pombe (strain 972 / ATCC 24843) (Fission yeast)).